Here is a 138-residue protein sequence, read N- to C-terminus: Putative pre-16S rRNA nuclease (138 aa).

It belongs to the YqgF nuclease family.

It localises to the cytoplasm. Could be a nuclease involved in processing of the 5'-end of pre-16S rRNA. The sequence is that of Putative pre-16S rRNA nuclease from Geobacillus sp. (strain WCH70).